A 1652-amino-acid chain; its full sequence is Venom factor (1652 aa).

Residues 1 to 22 (MEGMALYLVAALLIGFPASSFG) form the signal peptide. Positions 519, 542, 543, and 545 each coordinate Mg(2+). 12 cysteine pairs are disulfide-bonded: Cys-547/Cys-808, Cys-616/Cys-651, Cys-684/Cys-711, Cys-685/Cys-718, Cys-698/Cys-719, Cys-864/Cys-1502, Cys-1347/Cys-1478, Cys-1378/Cys-1447, Cys-1495/Cys-1500, Cys-1507/Cys-1579, Cys-1526/Cys-1650, and Cys-1626/Cys-1635. A propeptide spanning residues 657–740 (RRRRRSVVLL…REDELFLARS (84 aa)) is cleaved from the precursor. The C3a-like domain stretch occupies residues 661–739 (RSVVLLDSKA…KREDELFLAR (79 aa)). An Anaphylatoxin-like domain is found at 684–719 (CCEDGMHENPMGYSCEKREKYIQEGDACKAAFLECC). A factor B binding site region spans residues 743–754 (EDEFFGEDNIIS). The propeptide occupies 992-1270 (HLIITPSGCG…VVGFQGLAEY (279 aa)). The tract at residues 992–1270 (HLIITPSGCG…VVGFQGLAEY (279 aa)) is C3d-like domain. Residues 1000–1003 (CGEQ) constitute a cross-link (isoglutamyl cysteine thioester (Cys-Gln)). The factor H binding site stretch occupies residues 1197–1260 (VLMAASTERN…GGTYGQTQAT (64 aa)). One can recognise an NTR domain in the interval 1507 to 1650 (CSLLNQQKKI…LSNTLTIFGC (144 aa)).

Belongs to the venom complement C3 homolog family. In terms of assembly, heterotrimer of alpha, beta and gamma chains; disulfide-linked. Is active with factor B in the presence of factor D. In terms of processing, first processed by the removal of 4 Arg residues by furin-type protease, forming two chains, alpha and gamma/beta precursor, linked by a disulfide bond. Probably, a cobrin-like protease cleaves the C3a-like domain and then the C3d-like domain, generating the mature venom factor (VF). In terms of tissue distribution, expressed by the venom gland.

The protein resides in the secreted. Functionally, complement-activating protein in venom. It is a structural and functional analog of complement component C3b, the activated form of C3. It binds factor B (CFB), which is subsequently cleaved by factor D (CFD) to form the bimolecular complex VF/Bb. VF/Bb is a C3/C5 convertase that cleaves both complement components C3 and C5. Structurally, it resembles the C3b degradation product C3c, which is not able to form a C3/C5 convertase. Unlike C3b/Bb, VF/Bb is a stable complex and completely resistant to the actions of complement regulatory factors H (CFH) and I (CFI). Therefore, VF continuously activates complement resulting in the depletion of complement activity. This Crotalus adamanteus (Eastern diamondback rattlesnake) protein is Venom factor.